The primary structure comprises 405 residues: L-carnitine CoA-transferase (405 aa).

CoA contacts are provided by Lys-97 and Arg-104. Asp-169 acts as the Nucleophile in catalysis.

This sequence belongs to the CoA-transferase III family. CaiB subfamily. Homodimer.

It localises to the cytoplasm. The catalysed reaction is crotonobetainyl-CoA + (R)-carnitine = crotonobetaine + (R)-carnitinyl-CoA. It carries out the reaction 4-(trimethylamino)butanoyl-CoA + (R)-carnitine = (R)-carnitinyl-CoA + 4-(trimethylamino)butanoate. It participates in amine and polyamine metabolism; carnitine metabolism. Its function is as follows. Catalyzes the reversible transfer of the CoA moiety from gamma-butyrobetainyl-CoA to L-carnitine to generate L-carnitinyl-CoA and gamma-butyrobetaine. Is also able to catalyze the reversible transfer of the CoA moiety from gamma-butyrobetainyl-CoA or L-carnitinyl-CoA to crotonobetaine to generate crotonobetainyl-CoA. The protein is L-carnitine CoA-transferase of Escherichia coli (strain 55989 / EAEC).